We begin with the raw amino-acid sequence, 381 residues long: Queuine tRNA-ribosyltransferase (381 aa).

Asp-92 functions as the Proton acceptor in the catalytic mechanism. Substrate is bound by residues 92-96, Asp-146, Gln-190, and Gly-217; that span reads DSGGF. An RNA binding region spans residues 248–254; it reads GVGRPED. Asp-267 (nucleophile) is an active-site residue. Positions 272 to 276 are RNA binding; important for wobble base 34 recognition; that stretch reads TRNAR. Cys-305, Cys-307, Cys-310, and His-337 together coordinate Zn(2+).

This sequence belongs to the queuine tRNA-ribosyltransferase family. Homodimer. Within each dimer, one monomer is responsible for RNA recognition and catalysis, while the other monomer binds to the replacement base PreQ1. It depends on Zn(2+) as a cofactor.

It catalyses the reaction 7-aminomethyl-7-carbaguanine + guanosine(34) in tRNA = 7-aminomethyl-7-carbaguanosine(34) in tRNA + guanine. It participates in tRNA modification; tRNA-queuosine biosynthesis. Functionally, catalyzes the base-exchange of a guanine (G) residue with the queuine precursor 7-aminomethyl-7-deazaguanine (PreQ1) at position 34 (anticodon wobble position) in tRNAs with GU(N) anticodons (tRNA-Asp, -Asn, -His and -Tyr). Catalysis occurs through a double-displacement mechanism. The nucleophile active site attacks the C1' of nucleotide 34 to detach the guanine base from the RNA, forming a covalent enzyme-RNA intermediate. The proton acceptor active site deprotonates the incoming PreQ1, allowing a nucleophilic attack on the C1' of the ribose to form the product. After dissociation, two additional enzymatic reactions on the tRNA convert PreQ1 to queuine (Q), resulting in the hypermodified nucleoside queuosine (7-(((4,5-cis-dihydroxy-2-cyclopenten-1-yl)amino)methyl)-7-deazaguanosine). The chain is Queuine tRNA-ribosyltransferase from Xanthomonas euvesicatoria pv. vesicatoria (strain 85-10) (Xanthomonas campestris pv. vesicatoria).